The chain runs to 343 residues: Transmembrane protein 120A (343 aa).

Topologically, residues 1 to 132 are cytoplasmic; the sequence is MHPPPPGPLG…KQAKFAYKDE (132 aa). CoA is bound at residue K130. Residues 133 to 152 traverse the membrane as a helical segment; that stretch reads YEKFKLYLTIILILISFTCR. The Extracellular portion of the chain corresponds to 153–158; sequence FLLNSR. A helical membrane pass occupies residues 159-177; that stretch reads VTDAAFNFLLVWYYCTLTI. Over 178-190 the chain is Cytoplasmic; that stretch reads RESILINNGSRIK. Residues S187 and R188 each coordinate CoA. The chain crosses the membrane as a helical span at residues 191–209; sequence GWWVFHHYVSTFLSGVMLT. Topologically, residues 210–218 are extracellular; it reads WPDGLMYQK. A helical membrane pass occupies residues 219–240; it reads FRNQFLSFSMYQSFVQFLQYYY. CoA-binding residues include Q237, Y240, Q241, and H283. Over 241–270 the chain is Cytoplasmic; that stretch reads QSGCLYRLRALGERHTMDLTVEGFQSWMWR. Residues 271 to 294 form a helical membrane-spanning segment; that stretch reads GLTFLLPFLFFGHFWQLFNALTLF. The Extracellular segment spans residues 295–304; sequence NLARDPECKE. The helical transmembrane segment at 305–330 threads the bilayer; sequence WQVLMCGFPFLLLFLGNFFTTLRVVH. Over 331 to 343 the chain is Cytoplasmic; it reads QKFHNQLHGSKKE. K332 contributes to the CoA binding site.

The protein belongs to the TMEM120 family. As to quaternary structure, homodimer. Forms heterooligomer with TMEM120B. Interacts with PKD2; TMEM120A inhibits PKD2 channel activity through the physical association of PKD2 with TMEM120A.

It localises to the cell membrane. The protein resides in the nucleus inner membrane. It is found in the endoplasmic reticulum. Multifunctional protein involved in mechanosensation, and plays an essential role in lipid metabolism and adipocyte differentiation. May function as an ion channel involved in sensing mechanical stimuli. Mediates the mechanosensitivity of the PKD2-TMEM120A channel complex through direct physical interaction. TMEM120A seems to affect mechanosensation by inhibiting PIEZO2 channels, possibly by altering cellular lipid content. TMEM120A is structurally similar to a lipid-modifying enzyme, ELOVL7, and contains a bound coenzyme A molecule, which suggests it might function as an enzyme in lipid metabolism. Additionnaly, implicated in innate immune response against Zika virus. Acts as a key activator of the antiviral signaling involving STING1. The chain is Transmembrane protein 120A from Bos taurus (Bovine).